The primary structure comprises 1902 residues: PII-type proteinase (1902 aa).

An N-terminal signal peptide occupies residues 1–33 (MQRKKKGLSILLAGTVALGALAVLPVGEIQAKA). Residues 34–187 (AISQQTKVSS…VTLAKVYYPT (154 aa)) constitute a propeptide that is removed on maturation. The region spanning 191-697 (ANSMANVQAV…AGLVDVKAAI (507 aa)) is the Peptidase S8 domain. Catalysis depends on charge relay system residues aspartate 217, histidine 281, and serine 620. Over residues 1793–1805 (KTAGKGDDTTGTS) the composition is skewed to low complexity. The interval 1793 to 1872 (KTAGKGDDTT…GKGALPKTAE (80 aa)) is disordered. Residues 1867-1871 (LPKTA) carry the LPXTG sorting signal motif. Threonine 1870 carries the pentaglycyl murein peptidoglycan amidated threonine modification. A propeptide spans 1871 to 1902 (AETTERPAFGFLGVIVVSLMGVLGLKRKQREE) (removed by sortase).

The protein belongs to the peptidase S8 family.

It localises to the secreted. It is found in the cell wall. The catalysed reaction is Endopeptidase activity with very broad specificity, although some subsite preference have been noted, e.g. large hydrophobic residues in the P1 and P4 positions, and Pro in the P2 position. Best known for its action on caseins, although it has been shown to hydrolyze hemoglobin and oxidized insulin B-chain.. Protease which breaks down milk proteins during the growth of the bacteria on milk. This Lacticaseibacillus paracasei (Lactobacillus paracasei) protein is PII-type proteinase (prtP).